Here is a 48-residue protein sequence, read N- to C-terminus: uncharacterized protein (48 aa).

The protein resides in the plastid. The protein localises to the cyanelle. This is an uncharacterized protein from Cyanophora paradoxa.